The following is a 422-amino-acid chain: Exopolygalacturonase clone GBGE184 (422 aa).

Positions 1-31 (MANARSLVAKANNINVGSLILMALVFGSCVA) are cleaved as a signal peptide. PbH1 repeat units lie at residues 200 to 226 (TENVNIQNIKLTAPAESPNTDGIHLSN), 227 to 248 (ADNVSILDSTIATGDDCVSVGR), 250 to 270 (SNNVTVERVICGPGHGLSVGS), 280 to 301 (VSGIHVNNCTMIETDNGLRIKT), and 310 to 331 (AVDIKFENIIMQSVKNPIIIDQ). Asn-229 carries an N-linked (GlcNAc...) asparagine glycan. The active-site Proton donor is Asp-241. Cysteines 243 and 260 form a disulfide. Asn-252 is a glycosylation site (N-linked (GlcNAc...) asparagine). The active site involves His-264. A glycan (N-linked (GlcNAc...) asparagine) is linked at Asn-287. 2 disulfides stabilise this stretch: Cys-366–Cys-372 and Cys-404–Cys-420.

The protein belongs to the glycosyl hydrolase 28 family.

It is found in the secreted. The protein localises to the cell wall. The catalysed reaction is [(1-&gt;4)-alpha-D-galacturonosyl](n) + H2O = alpha-D-galacturonate + [(1-&gt;4)-alpha-D-galacturonosyl](n-1). Functionally, may function in depolymerizing pectin during pollen development, germination, and tube growth. Acts as an exo-polygalacturonase. The protein is Exopolygalacturonase clone GBGE184 (PGA3) of Arabidopsis thaliana (Mouse-ear cress).